The chain runs to 508 residues: ATP synthase subunit alpha, chloroplastic (508 aa).

ATP is bound at residue 171-178; it reads GDRQTGKT.

It belongs to the ATPase alpha/beta chains family. In terms of assembly, F-type ATPases have 2 components, CF(1) - the catalytic core - and CF(0) - the membrane proton channel. CF(1) has five subunits: alpha(3), beta(3), gamma(1), delta(1), epsilon(1). CF(0) has four main subunits: a, b, b' and c.

It localises to the plastid. The protein localises to the chloroplast thylakoid membrane. The catalysed reaction is ATP + H2O + 4 H(+)(in) = ADP + phosphate + 5 H(+)(out). Functionally, produces ATP from ADP in the presence of a proton gradient across the membrane. The alpha chain is a regulatory subunit. In Gnetum parvifolium (Small-leaved jointfir), this protein is ATP synthase subunit alpha, chloroplastic.